Here is a 283-residue protein sequence, read N- to C-terminus: Acetylglutamate kinase (283 aa).

Substrate contacts are provided by residues 63–64 (GG), arginine 85, and asparagine 178.

It belongs to the acetylglutamate kinase family. ArgB subfamily.

The protein localises to the cytoplasm. It catalyses the reaction N-acetyl-L-glutamate + ATP = N-acetyl-L-glutamyl 5-phosphate + ADP. Its pathway is amino-acid biosynthesis; L-arginine biosynthesis; N(2)-acetyl-L-ornithine from L-glutamate: step 2/4. In terms of biological role, catalyzes the ATP-dependent phosphorylation of N-acetyl-L-glutamate. This Prochlorococcus marinus (strain MIT 9515) protein is Acetylglutamate kinase.